The primary structure comprises 77 residues: Acyl carrier protein (77 aa).

Residues 2-77 form the Carrier domain; that stretch reads SDIADRVKKI…DAVKFISDAS (76 aa). Serine 37 carries the post-translational modification O-(pantetheine 4'-phosphoryl)serine.

This sequence belongs to the acyl carrier protein (ACP) family. 4'-phosphopantetheine is transferred from CoA to a specific serine of apo-ACP by AcpS. This modification is essential for activity because fatty acids are bound in thioester linkage to the sulfhydryl of the prosthetic group.

Its subcellular location is the cytoplasm. It participates in lipid metabolism; fatty acid biosynthesis. Its function is as follows. Carrier of the growing fatty acid chain in fatty acid biosynthesis. The polypeptide is Acyl carrier protein (Roseobacter denitrificans (strain ATCC 33942 / OCh 114) (Erythrobacter sp. (strain OCh 114))).